Here is a 426-residue protein sequence, read N- to C-terminus: Glucan endo-1,3-beta-glucosidase 11 (426 aa).

The N-terminal stretch at 1–30 (MELTSFHRSSLLFLISLTLIILPTTTTSIG) is a signal peptide. The N-linked (GlcNAc...) asparagine glycan is linked to Asn112. The active-site Proton donor is Glu121. The N-linked (GlcNAc...) asparagine glycan is linked to Asn126. Glu266 serves as the catalytic Nucleophile. The segment covering 360-372 (GGGTGGGNSSSGG) has biased composition (gly residues). A disordered region spans residues 360-389 (GGGTGGGNSSSGGGRDKSPVFPVSPVAPDS). A glycan (N-linked (GlcNAc...) asparagine) is linked at Asn367. A lipid anchor (GPI-anchor amidated serine) is attached at Ser398. Positions 399-426 (ASPVTGKRKGKGAILSLVVSMLLARHLL) are cleaved as a propeptide — removed in mature form.

Belongs to the glycosyl hydrolase 17 family.

It is found in the secreted. The protein resides in the cell wall. The protein localises to the cell membrane. It catalyses the reaction Hydrolysis of (1-&gt;3)-beta-D-glucosidic linkages in (1-&gt;3)-beta-D-glucans.. The chain is Glucan endo-1,3-beta-glucosidase 11 from Arabidopsis thaliana (Mouse-ear cress).